The sequence spans 174 residues: Dual-action ribosomal maturation protein DarP (174 aa).

It belongs to the DarP family.

It localises to the cytoplasm. Its function is as follows. Member of a network of 50S ribosomal subunit biogenesis factors which assembles along the 30S-50S interface, preventing incorrect 23S rRNA structures from forming. Promotes peptidyl transferase center (PTC) maturation. The chain is Dual-action ribosomal maturation protein DarP from Pseudomonas paraeruginosa (strain DSM 24068 / PA7) (Pseudomonas aeruginosa (strain PA7)).